A 212-amino-acid polypeptide reads, in one-letter code: Large ribosomal subunit protein uL4 (212 aa).

This sequence belongs to the universal ribosomal protein uL4 family. In terms of assembly, part of the 50S ribosomal subunit.

Functionally, one of the primary rRNA binding proteins, this protein initially binds near the 5'-end of the 23S rRNA. It is important during the early stages of 50S assembly. It makes multiple contacts with different domains of the 23S rRNA in the assembled 50S subunit and ribosome. Its function is as follows. Forms part of the polypeptide exit tunnel. The sequence is that of Large ribosomal subunit protein uL4 from Phenylobacterium zucineum (strain HLK1).